Reading from the N-terminus, the 250-residue chain is Flagellar L-ring protein (250 aa).

An N-terminal signal peptide occupies residues 1-32 (MTRINTNTQKNNNTKFSKLILGVMVSSIVLSG). The N-palmitoyl cysteine moiety is linked to residue Cys-33. Cys-33 carries the S-diacylglycerol cysteine lipid modification.

Belongs to the FlgH family. As to quaternary structure, the basal body constitutes a major portion of the flagellar organelle and consists of four rings (L,P,S, and M) mounted on a central rod.

Its subcellular location is the cell outer membrane. It localises to the bacterial flagellum basal body. Its function is as follows. Assembles around the rod to form the L-ring and probably protects the motor/basal body from shearing forces during rotation. The sequence is that of Flagellar L-ring protein from Hydrogenovibrio crunogenus (strain DSM 25203 / XCL-2) (Thiomicrospira crunogena).